The following is a 533-amino-acid chain: Thromboxane-A synthase (533 aa).

The Cytoplasmic segment spans residues 1–10 (MEALGFLKLE). Residues 11–31 (VNGPMVTVALSVALLALLKWY) form a helical membrane-spanning segment. The Lumenal segment spans residues 32–75 (STSAFSRLEKLGLRHPKPSPFIGNLMFFRQGFWESQMELRKLYG). Residues 76 to 96 (PLCGYYLGRRMFIVISEPDMI) traverse the membrane as a helical segment. The Cytoplasmic segment spans residues 97–223 (KQVLVENFSN…KRFFEFCIPR (127 aa)). Residues 224–244 (PILVLLLSFPSIMVPLARILP) form a helical membrane-spanning segment. Over 245-335 (NKNRDELNGF…LTVDEIVGQA (91 aa)) the chain is Lumenal. The chain crosses the membrane as a helical span at residues 336 to 356 (FIFLIAGYEIVTNTLSFATYL). The Cytoplasmic portion of the chain corresponds to 357–533 (LATNPDCQEK…NGVYIKIVSR (177 aa)). Residue Cys479 participates in heme binding.

It belongs to the cytochrome P450 family. Monomer. Requires heme as cofactor.

It is found in the endoplasmic reticulum membrane. The catalysed reaction is prostaglandin H2 = thromboxane A2. It carries out the reaction prostaglandin H2 = (12S)-hydroxy-(5Z,8E,10E)-heptadecatrienoate + malonaldehyde. The enzyme catalyses a hydroperoxyeicosatetraenoate = an oxoeicosatetraenoate + H2O. It catalyses the reaction (15S)-hydroperoxy-(5Z,8Z,11Z,13E)-eicosatetraenoate = 15-oxo-(5Z,8Z,11Z,13E)-eicosatetraenoate + H2O. The catalysed reaction is (15S)-hydroperoxy-(5Z,8Z,11Z,13E)-eicosatetraenoate + AH2 = (15S)-hydroxy-(5Z,8Z,11Z,13E)-eicosatetraenoate + A + H2O. Catalyzes the conversion of prostaglandin H2 (PGH2) to thromboxane A2 (TXA2), a potent inducer of blood vessel constriction and platelet aggregation. Also cleaves PGH2 to 12-hydroxy-heptadecatrienoicacid (12-HHT) and malondialdehyde, which is known to act as a mediator of DNA damage. 12-HHT and malondialdehyde are formed stoichiometrically in the same amounts as TXA2. Additionally, displays dehydratase activity, toward (15S)-hydroperoxy-(5Z,8Z,11Z,13E)-eicosatetraenoate (15(S)-HPETE) producing 15-KETE and 15-HETE. This chain is Thromboxane-A synthase (TBXAS1), found in Macaca fascicularis (Crab-eating macaque).